The following is a 155-amino-acid chain: Ribosomal RNA large subunit methyltransferase H 1 (155 aa).

Residues leucine 76, glycine 108, and 127–132 (FSKMTF) each bind S-adenosyl-L-methionine.

Belongs to the RNA methyltransferase RlmH family. Homodimer.

The protein resides in the cytoplasm. The catalysed reaction is pseudouridine(1915) in 23S rRNA + S-adenosyl-L-methionine = N(3)-methylpseudouridine(1915) in 23S rRNA + S-adenosyl-L-homocysteine + H(+). Specifically methylates the pseudouridine at position 1915 (m3Psi1915) in 23S rRNA. This is Ribosomal RNA large subunit methyltransferase H 1 from Thermoanaerobacter pseudethanolicus (strain ATCC 33223 / 39E) (Clostridium thermohydrosulfuricum).